A 430-amino-acid polypeptide reads, in one-letter code: Adenylosuccinate synthetase (430 aa).

Residues 13 to 19 (GDEGKGK) and 41 to 43 (GHT) contribute to the GTP site. Asp-14 acts as the Proton acceptor in catalysis. Mg(2+) is bound by residues Asp-14 and Gly-41. Residues 14–17 (DEGK), 39–42 (NAGH), Thr-130, Arg-144, Gln-225, Thr-240, and Arg-304 contribute to the IMP site. The active-site Proton donor is His-42. 300 to 306 (ATTGRAR) contacts substrate. GTP-binding positions include Arg-306, 332 to 334 (KLD), and 414 to 416 (STG).

This sequence belongs to the adenylosuccinate synthetase family. Homodimer. Mg(2+) is required as a cofactor.

The protein resides in the cytoplasm. The enzyme catalyses IMP + L-aspartate + GTP = N(6)-(1,2-dicarboxyethyl)-AMP + GDP + phosphate + 2 H(+). Its pathway is purine metabolism; AMP biosynthesis via de novo pathway; AMP from IMP: step 1/2. In terms of biological role, plays an important role in the de novo pathway of purine nucleotide biosynthesis. Catalyzes the first committed step in the biosynthesis of AMP from IMP. This is Adenylosuccinate synthetase from Pseudomonas aeruginosa (strain LESB58).